The sequence spans 570 residues: Sulfite reductase [NADPH] hemoprotein beta-component (570 aa).

Positions 434, 440, 479, and 483 each coordinate [4Fe-4S] cluster. Siroheme is bound at residue Cys483.

This sequence belongs to the nitrite and sulfite reductase 4Fe-4S domain family. In terms of assembly, alpha(8)-beta(8). The alpha component is a flavoprotein, the beta component is a hemoprotein. Siroheme serves as cofactor. It depends on [4Fe-4S] cluster as a cofactor.

It catalyses the reaction hydrogen sulfide + 3 NADP(+) + 3 H2O = sulfite + 3 NADPH + 4 H(+). Its pathway is sulfur metabolism; hydrogen sulfide biosynthesis; hydrogen sulfide from sulfite (NADPH route): step 1/1. Its function is as follows. Component of the sulfite reductase complex that catalyzes the 6-electron reduction of sulfite to sulfide. This is one of several activities required for the biosynthesis of L-cysteine from sulfate. The protein is Sulfite reductase [NADPH] hemoprotein beta-component of Cronobacter sakazakii (strain ATCC BAA-894) (Enterobacter sakazakii).